A 428-amino-acid chain; its full sequence is GTPase Obg (428 aa).

The Obg domain occupies 1–158; that stretch reads MFIDKAKVFI…LSIVLELKLL (158 aa). An OBG-type G domain is found at 159–331; that stretch reads ADVGLLGFPN…VIKEAARMLK (173 aa). Residues 165–172, 190–194, 212–215, 282–285, and 312–314 contribute to the GTP site; these read GFPNVGKS, FTTLK, DIPG, NKSD, and SAA. Mg(2+)-binding residues include serine 172 and threonine 192. Positions 345–428 constitute an OCT domain; that stretch reads MYIPEEKRFT…LNDFEFEYLL (84 aa).

The protein belongs to the TRAFAC class OBG-HflX-like GTPase superfamily. OBG GTPase family. As to quaternary structure, monomer. Mg(2+) serves as cofactor.

Its subcellular location is the cytoplasm. An essential GTPase which binds GTP, GDP and possibly (p)ppGpp with moderate affinity, with high nucleotide exchange rates and a fairly low GTP hydrolysis rate. Plays a role in control of the cell cycle, stress response, ribosome biogenesis and in those bacteria that undergo differentiation, in morphogenesis control. In Clostridium botulinum (strain Eklund 17B / Type B), this protein is GTPase Obg.